The sequence spans 1139 residues: Retinoblastoma-like protein 2 (1139 aa).

A disordered region spans residues 1–45 (MPSGGDQSPPPPPPPPAAAASDEEEEDDGEAEDAAPPAESPTPQI). Over residues 8 to 17 (SPPPPPPPPA) the composition is skewed to pro residues. Acidic residues predominate over residues 21 to 33 (SDEEEEDDGEAED). Ser413 bears the Phosphoserine mark. Position 417 is a phosphothreonine (Thr417). Residues 417–616 (TPVSTATHSL…EKIRDNENRV (200 aa)) form a domain A region. A pocket; binds E1A region spans residues 417–1024 (TPVSTATHSL…KQIKTFAMKY (608 aa)). Ser420 carries O-linked (GlcNAc) serine glycosylation. The tract at residues 617–827 (PTCEEVMPPQ…KQGQSVTSSS (211 aa)) is spacer. Ser639 is modified (phosphoserine). The residue at position 642 (Thr642) is a Phosphothreonine. The interval 654 to 678 (GGLGRSITSPTTLYDRYSSPPASTT) is disordered. Residues Ser662, Ser672, and Ser688 each carry the phosphoserine modification. The span at 810 to 827 (ISPGGQQQKQGQSVTSSS) shows a compositional bias: low complexity. 2 disordered regions span residues 810-831 (ISPGGQQQKQGQSVTSSSNRPR) and 933-999 (KGKR…DMEE). Residues 828 to 1024 (NRPRKTSSLS…KQIKTFAMKY (197 aa)) form a domain B region. Positions 941 to 955 (SGSSDSRSHQNSPTE) are enriched in polar residues. 6 positions are modified to phosphoserine: Ser948, Ser952, Ser966, Ser971, Ser972, and Ser973. Over residues 964-973 (DSSPVMRSSS) the composition is skewed to low complexity. At Thr974 the chain carries Phosphothreonine. The span at 977–987 (VPQPSSAPPTP) shows a compositional bias: pro residues. A phosphoserine mark is found at Ser981 and Ser982. Thr986 carries the post-translational modification Phosphothreonine. Phosphoserine occurs at positions 1035, 1068, 1080, and 1112.

It belongs to the retinoblastoma protein (RB) family. Interacts with AATF. Interacts with KMT5B, KMT5C and USP4. Component of the DREAM complex (also named LINC complex) at least composed of E2F4, E2F5, LIN9, LIN37, LIN52, LIN54, MYBL1, MYBL2, RBL1, RBL2, RBBP4, TFDP1 and TFDP2. The complex exists in quiescent cells where it represses cell cycle-dependent genes. It dissociates in S phase when LIN9, LIN37, LIN52 and LIN54 form a subcomplex that binds to MYBL2. Interacts with RINT1. Interacts with PML (isoform PML-1, isoform PML-2, isoform PML-3, isoform PML-4 and isoform PML-5). Interacts with RBBP9. Interacts with CD53. In terms of assembly, (Microbial infection) Interacts with JC virus small t antigen. Post-translationally, during G0 and early G1 phase of the cell cycle, phosphorylated on Ser-639 and on 5 sites within the domain B. Phosphorylation on Ser-672 in G1 leads to its ubiquitin-dependent proteolysis.

It localises to the nucleus. In terms of biological role, key regulator of entry into cell division. Directly involved in heterochromatin formation by maintaining overall chromatin structure and, in particular, that of constitutive heterochromatin by stabilizing histone methylation. Recruits and targets histone methyltransferases KMT5B and KMT5C, leading to epigenetic transcriptional repression. Controls histone H4 'Lys-20' trimethylation. Probably acts as a transcription repressor by recruiting chromatin-modifying enzymes to promoters. Potent inhibitor of E2F-mediated trans-activation, associates preferentially with E2F5. Binds to cyclins A and E. Binds to and may be involved in the transforming capacity of the adenovirus E1A protein. May act as a tumor suppressor. The chain is Retinoblastoma-like protein 2 (RBL2) from Homo sapiens (Human).